A 362-amino-acid polypeptide reads, in one-letter code: S-adenosylmethionine:tRNA ribosyltransferase-isomerase (362 aa).

It belongs to the QueA family. As to quaternary structure, monomer.

It is found in the cytoplasm. The enzyme catalyses 7-aminomethyl-7-carbaguanosine(34) in tRNA + S-adenosyl-L-methionine = epoxyqueuosine(34) in tRNA + adenine + L-methionine + 2 H(+). It participates in tRNA modification; tRNA-queuosine biosynthesis. Functionally, transfers and isomerizes the ribose moiety from AdoMet to the 7-aminomethyl group of 7-deazaguanine (preQ1-tRNA) to give epoxyqueuosine (oQ-tRNA). The protein is S-adenosylmethionine:tRNA ribosyltransferase-isomerase of Methylobacterium sp. (strain 4-46).